A 198-amino-acid polypeptide reads, in one-letter code: ATP-dependent Clp protease proteolytic subunit 2 (198 aa).

The active-site Nucleophile is S101. H126 is an active-site residue.

Belongs to the peptidase S14 family. Fourteen ClpP subunits assemble into 2 heptameric rings which stack back to back to give a disk-like structure with a central cavity, resembling the structure of eukaryotic proteasomes.

Its subcellular location is the cytoplasm. It catalyses the reaction Hydrolysis of proteins to small peptides in the presence of ATP and magnesium. alpha-casein is the usual test substrate. In the absence of ATP, only oligopeptides shorter than five residues are hydrolyzed (such as succinyl-Leu-Tyr-|-NHMec, and Leu-Tyr-Leu-|-Tyr-Trp, in which cleavage of the -Tyr-|-Leu- and -Tyr-|-Trp bonds also occurs).. Functionally, cleaves peptides in various proteins in a process that requires ATP hydrolysis. Has a chymotrypsin-like activity. Plays a major role in the degradation of misfolded proteins. The protein is ATP-dependent Clp protease proteolytic subunit 2 of Thermosynechococcus vestitus (strain NIES-2133 / IAM M-273 / BP-1).